A 1042-amino-acid polypeptide reads, in one-letter code: FHIP family protein AAEL005291 (1042 aa).

A compositionally biased stretch (polar residues) spans 1–14; it reads MSWLRSSPLRQSFS. Disordered regions lie at residues 1–31, 494–514, 821–866, and 905–977; these read MSWL…GGNS, NNTS…PQGG, PHSG…KRND, and SNSS…GSPH. The span at 839 to 859 shows a compositional bias: polar residues; that stretch reads VSMTSNLSQTTPMQLTPSSSY. 2 stretches are compositionally biased toward low complexity: residues 905–940 and 956–976; these read SNSS…FMGS and PSIG…TGSP.

It belongs to the FHIP family.

The sequence is that of FHIP family protein AAEL005291 from Aedes aegypti (Yellowfever mosquito).